The sequence spans 100 residues: Urease subunit gamma (100 aa).

Belongs to the urease gamma subunit family. In terms of assembly, heterotrimer of UreA (gamma), UreB (beta) and UreC (alpha) subunits. Three heterotrimers associate to form the active enzyme.

Its subcellular location is the cytoplasm. The enzyme catalyses urea + 2 H2O + H(+) = hydrogencarbonate + 2 NH4(+). Its pathway is nitrogen metabolism; urea degradation; CO(2) and NH(3) from urea (urease route): step 1/1. The polypeptide is Urease subunit gamma (Rhodococcus opacus (strain B4)).